A 222-amino-acid polypeptide reads, in one-letter code: Transcriptional regulatory protein PmrA (222 aa).

One can recognise a Response regulatory domain in the interval 2–116 (KLLIVEDDKL…ELQARVRALI (115 aa)). Aspartate 51 bears the 4-aspartylphosphate mark. The ompR/PhoB-type DNA-binding region spans 124-218 (NSKIQVDNIT…LRGFGYLLTK (95 aa)).

In terms of processing, phosphorylated by PmrB.

It is found in the cytoplasm. Functionally, member of the two-component regulatory system PmrB/PmrA involved in regulation of virulence. Unphosphorylated PmrA represses extracellular enzyme genes. Phosphorylation of PmrA by PmrB relieves such repression, which leads to activation of extracellular enzyme genes. Phosphorylated PmrA seems to repress expression of the pmrCAB operon. This Pectobacterium parmentieri protein is Transcriptional regulatory protein PmrA (pmrA).